Here is a 112-residue protein sequence, read N- to C-terminus: Transmembrane protein 14 homolog (112 aa).

Helical transmembrane passes span F9 to G26, L36 to L53, V60 to G77, and I87 to I109.

The protein belongs to the TMEM14 family.

It localises to the membrane. This chain is Transmembrane protein 14 homolog, found in Dictyostelium discoideum (Social amoeba).